A 197-amino-acid polypeptide reads, in one-letter code: Shikimate kinase (197 aa).

Gly-15–Ser-20 lines the ATP pocket. Ser-19 contributes to the Mg(2+) binding site. Residues Asp-37, Arg-61, and Gly-83 each coordinate substrate. Arg-121 is an ATP binding site. Arg-148 lines the substrate pocket.

This sequence belongs to the shikimate kinase family. In terms of assembly, monomer. Mg(2+) is required as a cofactor.

The protein localises to the cytoplasm. It carries out the reaction shikimate + ATP = 3-phosphoshikimate + ADP + H(+). Its pathway is metabolic intermediate biosynthesis; chorismate biosynthesis; chorismate from D-erythrose 4-phosphate and phosphoenolpyruvate: step 5/7. In terms of biological role, catalyzes the specific phosphorylation of the 3-hydroxyl group of shikimic acid using ATP as a cosubstrate. In Chlorobium phaeovibrioides (strain DSM 265 / 1930) (Prosthecochloris vibrioformis (strain DSM 265)), this protein is Shikimate kinase.